A 576-amino-acid chain; its full sequence is Aspartate--tRNA ligase (576 aa).

E173 contributes to the L-aspartate binding site. Residues Q197 to K200 form an aspartate region. R219 contacts L-aspartate. Residues R219–E221 and Q228 each bind ATP. H438 serves as a coordination point for L-aspartate. ATP is bound at residue E470. Position 477 (R477) interacts with L-aspartate. G522 to R525 contributes to the ATP binding site.

This sequence belongs to the class-II aminoacyl-tRNA synthetase family. Type 1 subfamily. As to quaternary structure, homodimer.

The protein localises to the cytoplasm. It carries out the reaction tRNA(Asp) + L-aspartate + ATP = L-aspartyl-tRNA(Asp) + AMP + diphosphate. Catalyzes the attachment of L-aspartate to tRNA(Asp) in a two-step reaction: L-aspartate is first activated by ATP to form Asp-AMP and then transferred to the acceptor end of tRNA(Asp). The protein is Aspartate--tRNA ligase of Aster yellows witches'-broom phytoplasma (strain AYWB).